Consider the following 311-residue polypeptide: tRNA-cytidine(32) 2-sulfurtransferase (311 aa).

The PP-loop motif motif lies at 47 to 52 (SGGKDS). The [4Fe-4S] cluster site is built by cysteine 122, cysteine 125, and cysteine 213.

Belongs to the TtcA family. As to quaternary structure, homodimer. It depends on Mg(2+) as a cofactor. Requires [4Fe-4S] cluster as cofactor.

Its subcellular location is the cytoplasm. The catalysed reaction is cytidine(32) in tRNA + S-sulfanyl-L-cysteinyl-[cysteine desulfurase] + AH2 + ATP = 2-thiocytidine(32) in tRNA + L-cysteinyl-[cysteine desulfurase] + A + AMP + diphosphate + H(+). It functions in the pathway tRNA modification. Catalyzes the ATP-dependent 2-thiolation of cytidine in position 32 of tRNA, to form 2-thiocytidine (s(2)C32). The sulfur atoms are provided by the cysteine/cysteine desulfurase (IscS) system. This Pectobacterium carotovorum subsp. carotovorum (strain PC1) protein is tRNA-cytidine(32) 2-sulfurtransferase.